A 338-amino-acid polypeptide reads, in one-letter code: Ketol-acid reductoisomerase (NADP(+)) (338 aa).

In terms of domain architecture, KARI N-terminal Rossmann spans 1–181; it reads MKVFYDKDAD…GGGRAGIIET (181 aa). NADP(+) is bound by residues 24–27, Arg-47, and Ser-52; that span reads YGSQ. Residue His-107 is part of the active site. NADP(+) is bound at residue Gly-133. The KARI C-terminal knotted domain occupies 182–327; that stretch reads NFREETETDL…EKLRAMMPWI (146 aa). Positions 190, 194, 226, and 230 each coordinate Mg(2+). A substrate-binding site is contributed by Ser-251.

It belongs to the ketol-acid reductoisomerase family. Requires Mg(2+) as cofactor.

The catalysed reaction is (2R)-2,3-dihydroxy-3-methylbutanoate + NADP(+) = (2S)-2-acetolactate + NADPH + H(+). It carries out the reaction (2R,3R)-2,3-dihydroxy-3-methylpentanoate + NADP(+) = (S)-2-ethyl-2-hydroxy-3-oxobutanoate + NADPH + H(+). It functions in the pathway amino-acid biosynthesis; L-isoleucine biosynthesis; L-isoleucine from 2-oxobutanoate: step 2/4. The protein operates within amino-acid biosynthesis; L-valine biosynthesis; L-valine from pyruvate: step 2/4. Involved in the biosynthesis of branched-chain amino acids (BCAA). Catalyzes an alkyl-migration followed by a ketol-acid reduction of (S)-2-acetolactate (S2AL) to yield (R)-2,3-dihydroxy-isovalerate. In the isomerase reaction, S2AL is rearranged via a Mg-dependent methyl migration to produce 3-hydroxy-3-methyl-2-ketobutyrate (HMKB). In the reductase reaction, this 2-ketoacid undergoes a metal-dependent reduction by NADPH to yield (R)-2,3-dihydroxy-isovalerate. In Cupriavidus taiwanensis (strain DSM 17343 / BCRC 17206 / CCUG 44338 / CIP 107171 / LMG 19424 / R1) (Ralstonia taiwanensis (strain LMG 19424)), this protein is Ketol-acid reductoisomerase (NADP(+)).